Reading from the N-terminus, the 147-residue chain is Hemoglobin subunit beta-1 (147 aa).

Residue Val-2 is modified to N-acetylvaline. The Globin domain occupies His-3–His-147. Residue Lys-18 is modified to N6-succinyllysine. Ser-45 bears the Phosphoserine mark. N6-succinyllysine is present on Lys-60. Positions 64 and 93 each coordinate heme b. The residue at position 105 (Arg-105) is an Asymmetric dimethylarginine. Thr-124 carries the post-translational modification Phosphothreonine.

It belongs to the globin family. In terms of assembly, hb1 is a heterotetramer of two alpha chains and two beta-1 chains. Red blood cells.

Involved in oxygen transport from the lung to the various peripheral tissues. The polypeptide is Hemoglobin subunit beta-1 (HBB1) (Chalinolobus morio (Chocolate-wattled bat)).